The primary structure comprises 196 residues: Molybdenum cofactor guanylyltransferase (196 aa).

Residues 10 to 12 (LAG), K23, N51, D69, and D99 each bind GTP. Residue D99 coordinates Mg(2+).

It belongs to the MobA family. In terms of assembly, monomer. It depends on Mg(2+) as a cofactor.

The protein resides in the cytoplasm. The catalysed reaction is Mo-molybdopterin + GTP + H(+) = Mo-molybdopterin guanine dinucleotide + diphosphate. Transfers a GMP moiety from GTP to Mo-molybdopterin (Mo-MPT) cofactor (Moco or molybdenum cofactor) to form Mo-molybdopterin guanine dinucleotide (Mo-MGD) cofactor. This chain is Molybdenum cofactor guanylyltransferase, found in Shewanella loihica (strain ATCC BAA-1088 / PV-4).